A 370-amino-acid polypeptide reads, in one-letter code: Galactose-1-phosphate uridylyltransferase (370 aa).

Zn(2+)-binding residues include cysteine 51 and cysteine 54. Residues alanine 60 and 76-77 contribute to the UDP-alpha-D-glucose site; that span reads NG. A Zn(2+)-binding site is contributed by histidine 121. Asparagine 166 lines the UDP-alpha-D-glucose pocket. Histidine 177 provides a ligand contact to Zn(2+). Histidine 179 serves as the catalytic Tele-UMP-histidine intermediate. UDP-alpha-D-glucose is bound at residue glutamine 181. Residues glutamate 195, histidine 294, histidine 311, and histidine 313 each contribute to the Fe cation site. UDP-alpha-D-glucose-binding positions include 326–329 and 331–332; these read KFLV and FE.

The protein belongs to the galactose-1-phosphate uridylyltransferase type 1 family. As to quaternary structure, homodimer. Zn(2+) serves as cofactor.

The enzyme catalyses alpha-D-galactose 1-phosphate + UDP-alpha-D-glucose = alpha-D-glucose 1-phosphate + UDP-alpha-D-galactose. Its pathway is carbohydrate metabolism; galactose metabolism. The polypeptide is Galactose-1-phosphate uridylyltransferase (GAL7) (Kluyveromyces lactis (strain ATCC 8585 / CBS 2359 / DSM 70799 / NBRC 1267 / NRRL Y-1140 / WM37) (Yeast)).